We begin with the raw amino-acid sequence, 111 residues long: Probable 4-amino-4-deoxy-L-arabinose-phosphoundecaprenol flippase subunit ArnE (111 aa).

The next 3 membrane-spanning stretches (helical) occupy residues 38–58, 61–81, and 91–111; these read LWLG…LLVL, LPVG…TLAA, and PRHW…GSAA. Residues 40–109 form the EamA domain; that stretch reads LGLALICMGA…IISGIIILGS (70 aa).

It belongs to the ArnE family. In terms of assembly, heterodimer of ArnE and ArnF.

The protein resides in the cell inner membrane. The protein operates within bacterial outer membrane biogenesis; lipopolysaccharide biosynthesis. Functionally, translocates 4-amino-4-deoxy-L-arabinose-phosphoundecaprenol (alpha-L-Ara4N-phosphoundecaprenol) from the cytoplasmic to the periplasmic side of the inner membrane. This is Probable 4-amino-4-deoxy-L-arabinose-phosphoundecaprenol flippase subunit ArnE from Salmonella agona (strain SL483).